Here is a 383-residue protein sequence, read N- to C-terminus: MGFIYARKLLLCMAVSIYAIGSTTTTETTTSSSSTSGSGQSTSSGTTNSSSSPTTSPPTTSSSPPTSTHTSSPSTANAQKHAGHHRGRAGGRRGSPQGGSHTTPHPDRLTPSPDDTYDDDTNHPNGRNNSIEIVPQLPPDRPIIELGVATLRKNFMEASCTVETNSDLAIFWKIGKPSVDAFNRGTTHTRLMRNGVPVYALVSTLRVPWLNVIPLTKITCAACPTNLVAGDGVDLNSCTTKSTTIPCPGQQRTHIFFSAKGDRAVCITSELVSQPTITWSVGSDRLRNDGFSQTWYGIQPGVCGILRSEVRIHRTTWRFGSTSKDYLCEVSASDSKTSDYKVLPNAHSTSNFALVAATTLTVTILCLLCCLYCMLTRPRASVY.

The N-terminal stretch at 1-25 (MGFIYARKLLLCMAVSIYAIGSTTT) is a signal peptide. The segment covering 24–75 (TTTETTTSSSSTSGSGQSTSSGTTNSSSSPTTSPPTTSSSPPTSTHTSSPST) has biased composition (low complexity). Residues 24–136 (TTTETTTSSS…RNNSIEIVPQ (113 aa)) are disordered. Residue asparagine 48 is glycosylated (N-linked (GlcNAc...) asparagine; by host). The segment covering 81-91 (HAGHHRGRAGG) has biased composition (basic residues). Asparagine 128 is a glycosylation site (N-linked (GlcNAc...) asparagine; by host). Residues 354–371 (LVAATTLTVTILCLLCCL) traverse the membrane as a helical segment.

Its subcellular location is the virion membrane. Functionally, the glycoprotein gp2 from the avirulent strain Kentucky A (KyA) is probably non functional since this strain harbors an in-frame deletion of 1,242 nucleotides in gene 71. This Equus caballus (Horse) protein is Glycoprotein gp2 (US4).